The primary structure comprises 289 residues: MTWPLPDRLSINSAISGSAVDLSSFAEFLRRQAPELLPASIKHGGGAVGDQLPHATTIVALKYPGGVLIAGDRRSTQGNMIAGRDVRKVYITDDYTATGIAGTAAIAVEFARLYAVELEHYEKLEGVPLTFAGKVNRLAIMVRGNLAAAMQGLVALPLLASYDIHASDPRSAGRIVSFDAAGGWNIEEEGYQAVGSGSIFAKSSIKKLYAQVTDADSALRVAVEALYDAADDDSATGGPDLVRGIYPTAVTINADGAVDVPEVRIAELAREVIGSRSRADTFGPDGGEK.

Positions 1–55 are cleaved as a propeptide — removed in mature form; by autocatalysis; sequence MTWPLPDRLSINSAISGSAVDLSSFAEFLRRQAPELLPASIKHGGGAVGDQLPHA. T56 serves as the catalytic Nucleophile.

It belongs to the peptidase T1B family. In terms of assembly, the 20S proteasome core is composed of 14 alpha and 14 beta subunits that assemble into four stacked heptameric rings, resulting in a barrel-shaped structure. The two inner rings, each composed of seven catalytic beta subunits, are sandwiched by two outer rings, each composed of seven alpha subunits. The catalytic chamber with the active sites is on the inside of the barrel. Has a gated structure, the ends of the cylinder being occluded by the N-termini of the alpha-subunits. Is capped by the proteasome-associated ATPase, ARC.

It is found in the cytoplasm. The enzyme catalyses Cleavage of peptide bonds with very broad specificity.. It participates in protein degradation; proteasomal Pup-dependent pathway. The formation of the proteasomal ATPase ARC-20S proteasome complex, likely via the docking of the C-termini of ARC into the intersubunit pockets in the alpha-rings, may trigger opening of the gate for substrate entry. Interconversion between the open-gate and close-gate conformations leads to a dynamic regulation of the 20S proteasome proteolysis activity. In terms of biological role, component of the proteasome core, a large protease complex with broad specificity involved in protein degradation. The polypeptide is Proteasome subunit beta (Mycobacterium marinum (strain ATCC BAA-535 / M)).